We begin with the raw amino-acid sequence, 187 residues long: Transmembrane protein 11-B, mitochondrial (187 aa).

Transmembrane regions (helical) follow at residues 79–95 (TAVLSGTACLLTPLALP) and 102–119 (VSLPAGVLSLACSTLYGI).

The protein belongs to the TMEM11 family.

Its subcellular location is the mitochondrion inner membrane. Its function is as follows. Plays a role in mitochondrial morphogenesis. This chain is Transmembrane protein 11-B, mitochondrial (tmem11-b), found in Xenopus laevis (African clawed frog).